The sequence spans 441 residues: uncharacterized protein (441 aa).

57–64 (GVRRGGKT) contacts ATP.

This is an uncharacterized protein from Methanocaldococcus jannaschii (strain ATCC 43067 / DSM 2661 / JAL-1 / JCM 10045 / NBRC 100440) (Methanococcus jannaschii).